The primary structure comprises 473 residues: 3-isopropylmalate dehydratase large subunit (473 aa).

Positions 353, 414, and 417 each coordinate [4Fe-4S] cluster.

Belongs to the aconitase/IPM isomerase family. LeuC type 1 subfamily. As to quaternary structure, heterodimer of LeuC and LeuD. Requires [4Fe-4S] cluster as cofactor.

The catalysed reaction is (2R,3S)-3-isopropylmalate = (2S)-2-isopropylmalate. It participates in amino-acid biosynthesis; L-leucine biosynthesis; L-leucine from 3-methyl-2-oxobutanoate: step 2/4. Its function is as follows. Catalyzes the isomerization between 2-isopropylmalate and 3-isopropylmalate, via the formation of 2-isopropylmaleate. This chain is 3-isopropylmalate dehydratase large subunit, found in Cellvibrio japonicus (strain Ueda107) (Pseudomonas fluorescens subsp. cellulosa).